A 943-amino-acid polypeptide reads, in one-letter code: Valine--tRNA ligase (943 aa).

The short motif at 45–55 (PNVTGTLHMGH) is the 'HIGH' region element. The 'KMSKS' region signature appears at 541–545 (KMSKS). K544 contacts ATP. The stretch at 875-934 (IDVAAERIRLAKEIEKLEKQISIAQGKLANEGFVARAPAAVIDQEKQRVADFTATLEQLK) forms a coiled coil.

It belongs to the class-I aminoacyl-tRNA synthetase family. ValS type 1 subfamily. Monomer.

It localises to the cytoplasm. The enzyme catalyses tRNA(Val) + L-valine + ATP = L-valyl-tRNA(Val) + AMP + diphosphate. Catalyzes the attachment of valine to tRNA(Val). As ValRS can inadvertently accommodate and process structurally similar amino acids such as threonine, to avoid such errors, it has a 'posttransfer' editing activity that hydrolyzes mischarged Thr-tRNA(Val) in a tRNA-dependent manner. The protein is Valine--tRNA ligase of Dechloromonas aromatica (strain RCB).